Consider the following 275-residue polypeptide: HUWE1-associated protein modifying stress responses 1 (275 aa).

Acidic residues predominate over residues 32–44 (AEQDEQLPPELQE). The tract at residues 32-51 (AEQDEQLPPELQEEAAAAAQ) is disordered. Residues 80–152 (QQPGLSLWVP…LISFLCGKVP (73 aa)) are HUWE1-binding and HAPSTR1 oligomerization (HBO) domain. Disordered stretches follow at residues 155-181 (RNSR…SSVE), 204-227 (SVRS…RRRN), and 250-275 (GTRK…NRMI). Ser-167 bears the Phosphoserine mark. A compositionally biased stretch (low complexity) spans 172–181 (TSTETSSSVE). Residues 204–216 (SVRSSTPGSPTHV) are compositionally biased toward polar residues. Ser-212 is subject to Phosphoserine.

The protein belongs to the HAPSTR1 family. In terms of assembly, homooligomer. Heterooligomer with HAPSTR2; the interaction is direct and stabilizes HAPSTR1. Interacts with HUWE1. Ubiquitinated by HUWE1. Promotes HAPSTR1 degradation through polyubiquitination.

Its subcellular location is the nucleus. It localises to the cytoplasm. Its function is as follows. Acts as a central player within a network of stress response pathways promoting cellular adaptability. The E3 ligase HUWE1 assists HAPSTR1 in controlling stress signaling and in turn, HUWE1 feeds back to promote the degradation of HAPSTR1. HAPSTR1 represents a central coordination mechanism for stress response programs. Functions as a negative regulator of TP53/P53 in the cellular response to telomere erosion and probably also DNA damage. May attenuate p53/TP53 activation through the E3 ubiquitin ligase HUWE1. This Homo sapiens (Human) protein is HUWE1-associated protein modifying stress responses 1.